The sequence spans 574 residues: Proline--tRNA ligase (574 aa).

Belongs to the class-II aminoacyl-tRNA synthetase family. ProS type 1 subfamily. As to quaternary structure, homodimer.

The protein resides in the cytoplasm. The enzyme catalyses tRNA(Pro) + L-proline + ATP = L-prolyl-tRNA(Pro) + AMP + diphosphate. Catalyzes the attachment of proline to tRNA(Pro) in a two-step reaction: proline is first activated by ATP to form Pro-AMP and then transferred to the acceptor end of tRNA(Pro). As ProRS can inadvertently accommodate and process non-cognate amino acids such as alanine and cysteine, to avoid such errors it has two additional distinct editing activities against alanine. One activity is designated as 'pretransfer' editing and involves the tRNA(Pro)-independent hydrolysis of activated Ala-AMP. The other activity is designated 'posttransfer' editing and involves deacylation of mischarged Ala-tRNA(Pro). The misacylated Cys-tRNA(Pro) is not edited by ProRS. The chain is Proline--tRNA ligase from Hahella chejuensis (strain KCTC 2396).